Consider the following 194-residue polypeptide: Small ribosomal subunit protein uS4c (194 aa).

Residues 82 to 143 form the S4 RNA-binding domain; that stretch reads MRLDNILFRL…KERSKVLIQN (62 aa).

This sequence belongs to the universal ribosomal protein uS4 family. As to quaternary structure, part of the 30S ribosomal subunit. Contacts protein S5. The interaction surface between S4 and S5 is involved in control of translational fidelity.

The protein localises to the plastid. It localises to the chloroplast. In terms of biological role, one of the primary rRNA binding proteins, it binds directly to 16S rRNA where it nucleates assembly of the body of the 30S subunit. With S5 and S12 plays an important role in translational accuracy. This chain is Small ribosomal subunit protein uS4c (rps4), found in Cypella sp. (strain Porto Alegre 027).